The following is a 42-amino-acid chain: Statherin (42 aa).

The segment at 1–6 (DSSEEK) is hydroxyapatite-binding; inhibits crystal growth. Phosphoserine is present on residues Ser2 and Ser3. Residues 18–42 (RYGPYQPFVPPPLYPQPYQPYQPQY) form a disordered region. Residues 18 to 42 (RYGPYQPFVPPPLYPQPYQPYQPQY) are hydrophobic; inhibits precipitation of calcium phosphate salts. Pro residues predominate over residues 24 to 42 (PFVPPPLYPQPYQPYQPQY).

The protein belongs to the histatin/statherin family. As to expression, secreted by parotid and submandibular glands.

The protein resides in the secreted. In terms of biological role, salivary protein that stabilizes saliva supersaturated with calcium salts by inhibiting the precipitation of calcium phosphate salts. It also modulates hydroxyapatite crystal formation on the tooth surface. The protein is Statherin (STATH) of Macaca arctoides (Stump-tailed macaque).